The following is a 165-amino-acid chain: Large ribosomal subunit protein uL10 (165 aa).

This sequence belongs to the universal ribosomal protein uL10 family. In terms of assembly, part of the ribosomal stalk of the 50S ribosomal subunit. The N-terminus interacts with L11 and the large rRNA to form the base of the stalk. The C-terminus forms an elongated spine to which L12 dimers bind in a sequential fashion forming a multimeric L10(L12)X complex.

Forms part of the ribosomal stalk, playing a central role in the interaction of the ribosome with GTP-bound translation factors. This Burkholderia ambifaria (strain MC40-6) protein is Large ribosomal subunit protein uL10.